The chain runs to 357 residues: Heme A synthase (357 aa).

The next 5 helical transmembrane spans lie at 24 to 44 (LVRYWLYAVFVVLIAIVMVGG), 110 to 130 (MLARFVGFLVAVPLAFFWVTG), 140 to 160 (MLGLLALGGLQGAIGWWMVAS), 175 to 195 (IHLTTACIIITAVFYIARGLV), and 209 to 229 (FAGWIVFAVLVQIYLGGLVAG). H272 contacts heme. 3 helical membrane passes run 274–294 (MFAYTVLVLTVLHSLQVWKQV), 303–323 (TIVLVGLVLIQAVIGIATLLM), and 325–345 (VPLHLGLTHQFFALIVLAFAV). H333 is a binding site for heme.

This sequence belongs to the COX15/CtaA family. Type 2 subfamily. Interacts with CtaB. Heme b is required as a cofactor.

The protein localises to the cell membrane. It carries out the reaction Fe(II)-heme o + 2 A + H2O = Fe(II)-heme a + 2 AH2. It functions in the pathway porphyrin-containing compound metabolism; heme A biosynthesis; heme A from heme O: step 1/1. Its function is as follows. Catalyzes the conversion of heme O to heme A by two successive hydroxylations of the methyl group at C8. The first hydroxylation forms heme I, the second hydroxylation results in an unstable dihydroxymethyl group, which spontaneously dehydrates, resulting in the formyl group of heme A. This Brucella anthropi (strain ATCC 49188 / DSM 6882 / CCUG 24695 / JCM 21032 / LMG 3331 / NBRC 15819 / NCTC 12168 / Alc 37) (Ochrobactrum anthropi) protein is Heme A synthase.